We begin with the raw amino-acid sequence, 570 residues long: Sulfite reductase [NADPH] hemoprotein beta-component (570 aa).

Cys-434, Cys-440, Cys-479, and Cys-483 together coordinate [4Fe-4S] cluster. Cys-483 contacts siroheme.

This sequence belongs to the nitrite and sulfite reductase 4Fe-4S domain family. As to quaternary structure, alpha(8)-beta(8). The alpha component is a flavoprotein, the beta component is a hemoprotein. It depends on siroheme as a cofactor. The cofactor is [4Fe-4S] cluster.

The enzyme catalyses hydrogen sulfide + 3 NADP(+) + 3 H2O = sulfite + 3 NADPH + 4 H(+). The protein operates within sulfur metabolism; hydrogen sulfide biosynthesis; hydrogen sulfide from sulfite (NADPH route): step 1/1. Component of the sulfite reductase complex that catalyzes the 6-electron reduction of sulfite to sulfide. This is one of several activities required for the biosynthesis of L-cysteine from sulfate. In Salmonella paratyphi B (strain ATCC BAA-1250 / SPB7), this protein is Sulfite reductase [NADPH] hemoprotein beta-component.